A 676-amino-acid chain; its full sequence is Envelope glycoprotein (676 aa).

A signal peptide spans 1–32; sequence MGVTGILQLPRDRFKRTSFFLWVIILFQRTFS. Residues 33–650 lie on the Extracellular side of the membrane; sequence IPLGVIHNST…NDNWWTGWRQ (618 aa). The N-linked (GlcNAc...) asparagine; by host glycan is linked to Asn-40. 5 cysteine pairs are disulfide-bonded: Cys-53–Cys-609, Cys-108–Cys-135, Cys-121–Cys-147, Cys-511–Cys-556, and Cys-601–Cys-608. The interval 54 to 201 is receptor-binding; it reads RDKLSSTNQL…DFFSSHPLRE (148 aa). Asn-204, Asn-228, Asn-238, Asn-257, Asn-268, Asn-296, Asn-317, Asn-333, Asn-346, Asn-386, and Asn-413 each carry an N-linked (GlcNAc...) asparagine; by host glycan. A mucin-like region region spans residues 305-485; that stretch reads ELSFTVVSNG…SGKLGLITNT (181 aa). Positions 315 to 335 are enriched in polar residues; it reads AKNISGQSPARTSSDPGTNTT. A disordered region spans residues 315 to 337; that stretch reads AKNISGQSPARTSSDPGTNTTTE. Over residues 373 to 391 the composition is skewed to polar residues; sequence TSPQSLTTKPGPDNSTHNT. Disordered regions lie at residues 373–392 and 402–479; these read TSPQSLTTKPGPDNSTHNTP and TQVE…SGKL. The segment covering 414 to 432 has biased composition (low complexity); that stretch reads DSTASDTPSATTAAGPPKA. The segment covering 433-464 has biased composition (polar residues); it reads ENTNTSKSTDFLDPATTTSPQNHSETAGNNNT. N-linked (GlcNAc...) asparagine; by host glycosylation is found at Asn-436, Asn-454, and Asn-462. The segment at 524–539 is fusion peptide; that stretch reads GAAIGLAWIPYFGPAA. Positions 554 to 595 form a coiled coil; sequence LICGLRQLANETTQALQLFLRATTELRTFSILNRKAIDFLLQ. Asn-563 carries N-linked (GlcNAc...) asparagine; by host glycosylation. A coiled-coil region spans residues 615–634; sequence WTKNITDKIDQIIHDFVDKT. Asn-618 is a glycosylation site (N-linked (GlcNAc...) asparagine; by host). A helical membrane pass occupies residues 651-671; it reads WIPAGIGVTGVIIAVIALFCI. S-palmitoyl cysteine; by host attachment occurs at residues Cys-670 and Cys-672. Topologically, residues 672–676 are cytoplasmic; the sequence is CKFVF.

The protein belongs to the filoviruses glycoprotein family. As to quaternary structure, homotrimer; each monomer consists of a GP1 and a GP2 subunit linked by disulfide bonds. The resulting peplomers (GP1,2) protrude from the virus surface as spikes. Interacts with host integrin alpha-V/ITGAV. Interacts with host CLEC10A. Binds also to host CD209 and CLEC4M/DC-SIGN(R). Interacts with host FOLR1. Interacts with BST2; this interaction inhibits the antiviral effect of BST2 and this allows viral release from infected cells. Interacts with host FCN1; this interaction enhances viral entry. Interacts with host TLR4; this interaction induces cell death in T-lymphocytes or proinflammatory cytokines and SOCS1 production in monocytes. Interacts with host entry receptor NPC1. In terms of assembly, GP1 and GP2delta are part of GP1,2delta soluble complexes released by ectodomain shedding. In terms of processing, the signal peptide region modulates GP's high mannose glycosylation, thereby determining the efficiency of the interactions with DC-SIGN(R). N-glycosylated. Post-translationally, O-glycosylated in the mucin-like region. In terms of processing, palmitoylation of GP2 is not required for its function. Specific enzymatic cleavages in vivo yield mature proteins. The precursor is processed into GP1 and GP2 by host cell furin in the trans Golgi, and maybe by other host proteases, to yield the mature GP1 and GP2 proteins. The cleavage site corresponds to the furin optimal cleavage sequence [KR]-X-[KR]-R. This cleavage does not seem to be required for function. After the internalization of the virus into cell endosomes, GP1 C-terminus is removed by the endosomal proteases cathepsin B, cathepsin L, or both, leaving a 19-kDa N-terminal fragment which is further digested by cathepsin B. Proteolytic processing of GP1,2 by host ADAM17 can remove the transmembrane anchor of GP2 and leads to shedding of complexes consisting in GP1 and truncated GP2 (GP1,2delta).

It localises to the virion membrane. The protein resides in the host cell membrane. It is found in the secreted. Its function is as follows. Trimeric GP1,2 complexes form the virion surface spikes and mediate the viral entry processes, with GP1 acting as the receptor-binding subunit and GP2 as the membrane fusion subunit. At later times of infection, down-regulates the expression of various host cell surface molecules that are essential for immune surveillance and cell adhesion. Down-modulates several integrins including ITGA1, ITGA2, ITGA3, ITGA4, ITGA5, ITGA6, ITGAV and ITGB1. This decrease in cell adhesion molecules may lead to cell detachment, contributing to the disruption of blood vessel integrity and hemorrhages developed during infection (cytotoxicity). Interacts with host TLR4 and thereby stimulates the differentiation and activation of monocytes leading to bystander death of T-lymphocytes. Down-regulates as well the function of host natural killer cells. Counteracts the antiviral effect of host BST2/tetherin that restricts release of progeny virions from infected cells. However, cooperates with VP40 and host BST2 to activate canonical NF-kappa-B pathway in a manner dependent on neddylation. In terms of biological role, functions as a decoy for anti-GP1,2 antibodies thereby contributing to viral immune evasion. Interacts and activates host macrophages and dendritic cells inducing up-regulation of cytokine transcription. This effect is mediated throught activation of host TLR4. Responsible for binding to the receptor(s) on target cells. Interacts with CD209/DC-SIGN and CLEC4M/DC-SIGNR which act as cofactors for virus entry into dendritic cells (DCs) and endothelial cells. Binding to the macrophage specific lectin CLEC10A also seems to enhance virus infectivity. Interaction with FOLR1/folate receptor alpha may be a cofactor for virus entry in some cell types, although results are contradictory. Members of the Tyro3 receptor tyrosine kinase family also seem to be cell entry factors in filovirus infection. Once attached, the virions are internalized through clathrin-dependent endocytosis and/or macropinocytosis. After internalization of the virus into the endosomes of the host cell, proteolysis of GP1 by two cysteine proteases, CTSB/cathepsin B and CTSL/cathepsin L removes the glycan cap and allows GP1 binding to the host entry receptor NPC1. NPC1-binding, Ca(2+) and acidic pH induce a conformational change of GP2, which unmasks its fusion peptide and permit membranes fusion. Functionally, acts as a class I viral fusion protein. Under the current model, the protein has at least 3 conformational states: pre-fusion native state, pre-hairpin intermediate state, and post-fusion hairpin state. During viral and target cell membrane fusion, the coiled coil regions (heptad repeats) assume a trimer-of-hairpins structure, positioning the fusion peptide in close proximity to the C-terminal region of the ectodomain. The formation of this structure appears to drive apposition and subsequent fusion of viral and target cell membranes. Responsible for penetration of the virus into the cell cytoplasm by mediating the fusion of the membrane of the endocytosed virus particle with the endosomal membrane. Low pH in endosomes induces an irreversible conformational change in GP2, releasing the fusion hydrophobic peptide. This is Envelope glycoprotein (GP) from Epomops franqueti (Franquet's epauletted fruit bat).